The sequence spans 346 residues: tRNA N6-adenosine threonylcarbamoyltransferase (346 aa).

Fe cation is bound by residues His-111 and His-115. Residues 134 to 138, Asp-167, Gly-180, Asp-184, and Asn-280 each bind substrate; that span reads LVSGG. A Fe cation-binding site is contributed by Asp-308.

Belongs to the KAE1 / TsaD family. Fe(2+) serves as cofactor.

It is found in the cytoplasm. The enzyme catalyses L-threonylcarbamoyladenylate + adenosine(37) in tRNA = N(6)-L-threonylcarbamoyladenosine(37) in tRNA + AMP + H(+). In terms of biological role, required for the formation of a threonylcarbamoyl group on adenosine at position 37 (t(6)A37) in tRNAs that read codons beginning with adenine. Is involved in the transfer of the threonylcarbamoyl moiety of threonylcarbamoyl-AMP (TC-AMP) to the N6 group of A37, together with TsaE and TsaB. TsaD likely plays a direct catalytic role in this reaction. The protein is tRNA N6-adenosine threonylcarbamoyltransferase of Crocosphaera subtropica (strain ATCC 51142 / BH68) (Cyanothece sp. (strain ATCC 51142)).